A 486-amino-acid chain; its full sequence is Monocarboxylate transporter 12 (486 aa).

Over 1–9 (MTKITRVSL) the chain is Cytoplasmic. Transmembrane regions (helical) follow at residues 10 to 30 (ASPP…LVTI), 58 to 78 (AWIH…GSVV), 86 to 106 (AGIM…SFAT), 115 to 135 (LGVL…AMVG), 148 to 168 (IAMS…QLLI), 177 to 197 (LLIL…MRPI), 253 to 273 (FVVL…LFVY), 289 to 309 (AFLM…FGWL), 320 to 340 (YVCY…LPML), 353 to 373 (FGYF…EIVG), 383 to 403 (VVYF…GWLV), and 410 to 430 (TAAF…LGFV). Residues 431 to 486 (RIVKRMKRTQVPFPVKDSDPKLQLWTNGSVAYSVARELDQKDEEPLPKARSGCNLT) lie on the Cytoplasmic side of the membrane.

The protein belongs to the major facilitator superfamily. Monocarboxylate porter (TC 2.A.1.13) family. In terms of assembly, interacts with isoform 2 of BSG; this interaction is required for its localization to the plasma membrane. As to expression, highly expressed in the lung, liver, kidney, and pancreas. Expressed in eye lens.

It is found in the cell membrane. It localises to the basolateral cell membrane. The enzyme catalyses creatine(in) = creatine(out). It catalyses the reaction guanidinoacetate(in) = guanidinoacetate(out). Its activity is regulated as follows. Creatine uptake is inhibited by carbonyl cyanide 3-chlorophenylhydrazone (CCCP) and by valinomycin. In terms of biological role, functions as a transporter for creatine and as well for its precursor guanidinoacetate. Transport of creatine and GAA is independent of resting membrane potential and extracellular Na(+), Cl(-), or pH. Contributes to the process of creatine biosynthesis and distribution. The polypeptide is Monocarboxylate transporter 12 (Mus musculus (Mouse)).